Reading from the N-terminus, the 478-residue chain is Protein nucleotidyltransferase YdiU (478 aa).

ATP-binding residues include Gly84, Gly86, Arg87, Lys107, Asp119, Gly120, Arg170, and Arg177. Residue Asp246 is the Proton acceptor of the active site. Mg(2+) is bound by residues Asn247 and Asp256. Asp256 serves as a coordination point for ATP.

It belongs to the SELO family. It depends on Mg(2+) as a cofactor. Requires Mn(2+) as cofactor.

It catalyses the reaction L-seryl-[protein] + ATP = 3-O-(5'-adenylyl)-L-seryl-[protein] + diphosphate. It carries out the reaction L-threonyl-[protein] + ATP = 3-O-(5'-adenylyl)-L-threonyl-[protein] + diphosphate. The enzyme catalyses L-tyrosyl-[protein] + ATP = O-(5'-adenylyl)-L-tyrosyl-[protein] + diphosphate. The catalysed reaction is L-histidyl-[protein] + UTP = N(tele)-(5'-uridylyl)-L-histidyl-[protein] + diphosphate. It catalyses the reaction L-seryl-[protein] + UTP = O-(5'-uridylyl)-L-seryl-[protein] + diphosphate. It carries out the reaction L-tyrosyl-[protein] + UTP = O-(5'-uridylyl)-L-tyrosyl-[protein] + diphosphate. Its function is as follows. Nucleotidyltransferase involved in the post-translational modification of proteins. It can catalyze the addition of adenosine monophosphate (AMP) or uridine monophosphate (UMP) to a protein, resulting in modifications known as AMPylation and UMPylation. The sequence is that of Protein nucleotidyltransferase YdiU from Escherichia coli (strain K12 / MC4100 / BW2952).